Reading from the N-terminus, the 388-residue chain is Branched-chain-amino-acid aminotransferase 2, chloroplastic (388 aa).

Residues 1-22 constitute a chloroplast transit peptide; it reads MIKTITSLRKTLVLPLHLHIRT. The residue at position 235 (K235) is an N6-(pyridoxal phosphate)lysine.

Belongs to the class-IV pyridoxal-phosphate-dependent aminotransferase family. Requires pyridoxal 5'-phosphate as cofactor.

Its subcellular location is the plastid. It is found in the chloroplast. The catalysed reaction is L-leucine + 2-oxoglutarate = 4-methyl-2-oxopentanoate + L-glutamate. The enzyme catalyses L-isoleucine + 2-oxoglutarate = (S)-3-methyl-2-oxopentanoate + L-glutamate. It catalyses the reaction L-valine + 2-oxoglutarate = 3-methyl-2-oxobutanoate + L-glutamate. Its pathway is amino-acid biosynthesis; L-isoleucine biosynthesis; L-isoleucine from 2-oxobutanoate: step 4/4. It participates in amino-acid biosynthesis; L-leucine biosynthesis; L-leucine from 3-methyl-2-oxobutanoate: step 4/4. It functions in the pathway amino-acid biosynthesis; L-valine biosynthesis; L-valine from pyruvate: step 4/4. Its function is as follows. Converts 2-oxo acids to branched-chain amino acids. Shows activity with L-Leu, L-Ile and L-Val as amino donors and 2-oxoglutarate as an amino acceptor, but no activity for D-isomers of Leu, Ile, Val, Asp, Glu or Ala. This chain is Branched-chain-amino-acid aminotransferase 2, chloroplastic (BCAT2), found in Arabidopsis thaliana (Mouse-ear cress).